A 324-amino-acid polypeptide reads, in one-letter code: Probable non-intrinsic ABC protein 5 (324 aa).

Residues 2-111 (DRERYDKVIE…ADLTLVMKDG (110 aa)) form the ABC transporter domain. 2 consecutive transmembrane segments (helical) span residues 212–232 (YITL…QILF) and 259–279 (LSTL…CILV). The region spanning 222–324 (VPFILLGQIL…TCSKTCIYSS (103 aa)) is the ABC transmembrane type-1 domain.

This sequence belongs to the ABC transporter superfamily.

The protein localises to the membrane. The polypeptide is Probable non-intrinsic ABC protein 5 (NAP5) (Arabidopsis thaliana (Mouse-ear cress)).